The primary structure comprises 476 residues: Argininosuccinate lyase (476 aa).

The protein belongs to the lyase 1 family. Argininosuccinate lyase subfamily.

It localises to the cytoplasm. It catalyses the reaction 2-(N(omega)-L-arginino)succinate = fumarate + L-arginine. Its pathway is amino-acid biosynthesis; L-arginine biosynthesis; L-arginine from L-ornithine and carbamoyl phosphate: step 3/3. The chain is Argininosuccinate lyase from Leptothrix cholodnii (strain ATCC 51168 / LMG 8142 / SP-6) (Leptothrix discophora (strain SP-6)).